We begin with the raw amino-acid sequence, 303 residues long: UDP-3-O-acyl-N-acetylglucosamine deacetylase (303 aa).

Zn(2+) is bound by residues His78, His237, and Asp241. Catalysis depends on His264, which acts as the Proton donor.

It belongs to the LpxC family. Requires Zn(2+) as cofactor.

The catalysed reaction is a UDP-3-O-[(3R)-3-hydroxyacyl]-N-acetyl-alpha-D-glucosamine + H2O = a UDP-3-O-[(3R)-3-hydroxyacyl]-alpha-D-glucosamine + acetate. Its pathway is glycolipid biosynthesis; lipid IV(A) biosynthesis; lipid IV(A) from (3R)-3-hydroxytetradecanoyl-[acyl-carrier-protein] and UDP-N-acetyl-alpha-D-glucosamine: step 2/6. Functionally, catalyzes the hydrolysis of UDP-3-O-myristoyl-N-acetylglucosamine to form UDP-3-O-myristoylglucosamine and acetate, the committed step in lipid A biosynthesis. The protein is UDP-3-O-acyl-N-acetylglucosamine deacetylase of Pseudomonas fluorescens (strain Pf0-1).